Reading from the N-terminus, the 221-residue chain is uncharacterized protein (221 aa).

The protein to E.coli YheO.

This is an uncharacterized protein from Haemophilus influenzae (strain ATCC 51907 / DSM 11121 / KW20 / Rd).